Here is a 644-residue protein sequence, read N- to C-terminus: Archaeal Lon protease (644 aa).

Residues 1 to 18 (MKTTIKNSRTQESVSYEG) show a composition bias toward polar residues. Residues 1–30 (MKTTIKNSRTQESVSYEGNETKKGTGETLS) form a disordered region. Topologically, residues 1–137 (MKTTIKNSRT…KARSQDEKKN (137 aa)) are cytoplasmic. An ATP-binding site is contributed by 71–78 (GEPGVGKS). 2 helical membrane-spanning segments follow: residues 138-155 (LFMM…FMMN) and 156-171 (QFLA…FLAL). Topologically, residues 172–644 (QQFRPRTTVM…PSIMKKPAMH (473 aa)) are cytoplasmic. The Lon proteolytic domain occupies 438 to 617 (GGEVGRVNGL…GDVLEHALIG (180 aa)). Residues Ser524 and Lys567 contribute to the active site.

Belongs to the peptidase S16 family. Archaeal LonB subfamily. In terms of assembly, homohexamer. Organized in a ring with a central cavity.

It is found in the cell membrane. In terms of biological role, ATP-dependent serine protease that mediates the selective degradation of mutant and abnormal proteins as well as certain short-lived regulatory proteins. Degrades polypeptides processively. This Methanothermobacter thermautotrophicus (strain ATCC 29096 / DSM 1053 / JCM 10044 / NBRC 100330 / Delta H) (Methanobacterium thermoautotrophicum) protein is Archaeal Lon protease.